The sequence spans 801 residues: Lon protease 2 (801 aa).

The Lon N-terminal domain maps to 14-209; the sequence is LPMLPVRDIV…LVNEILAAEL (196 aa). 361–368 serves as a coordination point for ATP; sequence GPPGVGKT. The Lon proteolytic domain maps to 597-778; it reads DSQVGVVQGL…DEVFAVAFDK (182 aa). Active-site residues include Ser684 and Lys727. Residues 780 to 791 are compositionally biased toward basic and acidic residues; that stretch reads AKGQEKKPAAKK. A disordered region spans residues 780–801; that stretch reads AKGQEKKPAAKKDPKKTKSLAA. The segment covering 792 to 801 has biased composition (basic residues); the sequence is DPKKTKSLAA.

It belongs to the peptidase S16 family. As to quaternary structure, homohexamer. Organized in a ring with a central cavity.

It localises to the cytoplasm. It catalyses the reaction Hydrolysis of proteins in presence of ATP.. Its function is as follows. ATP-dependent serine protease that mediates the selective degradation of mutant and abnormal proteins as well as certain short-lived regulatory proteins. Required for cellular homeostasis and for survival from DNA damage and developmental changes induced by stress. Degrades polypeptides processively to yield small peptide fragments that are 5 to 10 amino acids long. Binds to DNA in a double-stranded, site-specific manner. The protein is Lon protease 2 of Bdellovibrio bacteriovorus (strain ATCC 15356 / DSM 50701 / NCIMB 9529 / HD100).